The primary structure comprises 325 residues: Endo-1,4-beta-xylanase 2 (325 aa).

An N-terminal signal peptide occupies residues 1-18 (MLYTSIFAAAMAASGAMA). The GH10 domain maps to 26–325 (ASNCTTLDSF…KAAVKAIMAI (300 aa)). An N-linked (GlcNAc...) asparagine glycan is attached at asparagine 28. The active-site Proton donor is glutamate 157. Residue glutamate 262 is the Nucleophile of the active site. Cysteines 280 and 286 form a disulfide.

The protein belongs to the glycosyl hydrolase 10 (cellulase F) family.

It is found in the secreted. It carries out the reaction Endohydrolysis of (1-&gt;4)-beta-D-xylosidic linkages in xylans.. Its pathway is glycan degradation; xylan degradation. Endo-1,4-beta-xylanase involved in the hydrolysis of xylan, a major structural heterogeneous polysaccharide found in plant biomass representing the second most abundant polysaccharide in the biosphere, after cellulose. The sequence is that of Endo-1,4-beta-xylanase 2 (xyl2) from Claviceps purpurea (Ergot fungus).